Here is an 876-residue protein sequence, read N- to C-terminus: Valine--tRNA ligase (876 aa).

Positions 44 to 54 (PNVTGKLHLGH) match the 'HIGH' region motif. Residues 520-524 (KMSKS) carry the 'KMSKS' region motif. K523 serves as a coordination point for ATP. Positions 806-876 (EGLIDMDKEI…VKLRINQLKA (71 aa)) form a coiled coil.

It belongs to the class-I aminoacyl-tRNA synthetase family. ValS type 1 subfamily. In terms of assembly, monomer.

The protein resides in the cytoplasm. It carries out the reaction tRNA(Val) + L-valine + ATP = L-valyl-tRNA(Val) + AMP + diphosphate. Its function is as follows. Catalyzes the attachment of valine to tRNA(Val). As ValRS can inadvertently accommodate and process structurally similar amino acids such as threonine, to avoid such errors, it has a 'posttransfer' editing activity that hydrolyzes mischarged Thr-tRNA(Val) in a tRNA-dependent manner. The sequence is that of Valine--tRNA ligase from Staphylococcus saprophyticus subsp. saprophyticus (strain ATCC 15305 / DSM 20229 / NCIMB 8711 / NCTC 7292 / S-41).